The following is a 271-amino-acid chain: Enolase-phosphatase E1 (271 aa).

Mg(2+) is bound by residues Asp18 and Glu20. Residues Ser144–Ser145 and Lys194 contribute to the substrate site. Asp221 is a Mg(2+) binding site.

Belongs to the HAD-like hydrolase superfamily. MasA/MtnC family. As to quaternary structure, monomer. Mg(2+) is required as a cofactor.

It is found in the cytoplasm. It localises to the nucleus. The catalysed reaction is 5-methylsulfanyl-2,3-dioxopentyl phosphate + H2O = 1,2-dihydroxy-5-(methylsulfanyl)pent-1-en-3-one + phosphate. Its pathway is amino-acid biosynthesis; L-methionine biosynthesis via salvage pathway; L-methionine from S-methyl-5-thio-alpha-D-ribose 1-phosphate: step 3/6. It functions in the pathway amino-acid biosynthesis; L-methionine biosynthesis via salvage pathway; L-methionine from S-methyl-5-thio-alpha-D-ribose 1-phosphate: step 4/6. In terms of biological role, bifunctional enzyme that catalyzes the enolization of 2,3-diketo-5-methylthiopentyl-1-phosphate (DK-MTP-1-P) into the intermediate 2-hydroxy-3-keto-5-methylthiopentenyl-1-phosphate (HK-MTPenyl-1-P), which is then dephosphorylated to form the acireductone 1,2-dihydroxy-3-keto-5-methylthiopentene (DHK-MTPene). The sequence is that of Enolase-phosphatase E1 from Candida albicans (strain WO-1) (Yeast).